The chain runs to 450 residues: Probable glycine dehydrogenase (decarboxylating) subunit 1 (450 aa).

This sequence belongs to the GcvP family. N-terminal subunit subfamily. As to quaternary structure, the glycine cleavage system is composed of four proteins: P, T, L and H. In this organism, the P 'protein' is a heterodimer of two subunits.

The enzyme catalyses N(6)-[(R)-lipoyl]-L-lysyl-[glycine-cleavage complex H protein] + glycine + H(+) = N(6)-[(R)-S(8)-aminomethyldihydrolipoyl]-L-lysyl-[glycine-cleavage complex H protein] + CO2. In terms of biological role, the glycine cleavage system catalyzes the degradation of glycine. The P protein binds the alpha-amino group of glycine through its pyridoxal phosphate cofactor; CO(2) is released and the remaining methylamine moiety is then transferred to the lipoamide cofactor of the H protein. The chain is Probable glycine dehydrogenase (decarboxylating) subunit 1 from Desulfotalea psychrophila (strain LSv54 / DSM 12343).